Consider the following 348-residue polypeptide: Dihydroorotase (348 aa).

Residues His-17 and His-19 each coordinate Zn(2+). Residues 19-21 (HLR) and Asn-45 each bind substrate. Zn(2+) is bound by residues Lys-103, His-140, and His-178. The residue at position 103 (Lys-103) is an N6-carboxylysine. His-140 is a substrate binding site. Residue Leu-223 participates in substrate binding. A Zn(2+)-binding site is contributed by Asp-251. Residue Asp-251 is part of the active site. Residues His-255 and Ala-267 each contribute to the substrate site.

This sequence belongs to the metallo-dependent hydrolases superfamily. DHOase family. Class II DHOase subfamily. As to quaternary structure, homodimer. It depends on Zn(2+) as a cofactor.

It catalyses the reaction (S)-dihydroorotate + H2O = N-carbamoyl-L-aspartate + H(+). Its pathway is pyrimidine metabolism; UMP biosynthesis via de novo pathway; (S)-dihydroorotate from bicarbonate: step 3/3. Its function is as follows. Catalyzes the reversible cyclization of carbamoyl aspartate to dihydroorotate. The chain is Dihydroorotase from Salmonella paratyphi B (strain ATCC BAA-1250 / SPB7).